A 348-amino-acid polypeptide reads, in one-letter code: Putative 4-hydroxythreonine-4-phosphate dehydrogenase 2 (348 aa).

The a divalent metal cation site is built by histidine 180, histidine 224, and histidine 279.

The protein belongs to the PdxA family. As to quaternary structure, homodimer. The cofactor is Zn(2+). Requires Mg(2+) as cofactor. Co(2+) serves as cofactor.

The protein localises to the cytoplasm. The catalysed reaction is 4-(phosphooxy)-L-threonine + NAD(+) = 3-amino-2-oxopropyl phosphate + CO2 + NADH. The protein operates within cofactor biosynthesis; pyridoxine 5'-phosphate biosynthesis; pyridoxine 5'-phosphate from D-erythrose 4-phosphate: step 4/5. Its function is as follows. Catalyzes the NAD(P)-dependent oxidation of 4-(phosphooxy)-L-threonine (HTP) into 2-amino-3-oxo-4-(phosphooxy)butyric acid which spontaneously decarboxylates to form 3-amino-2-oxopropyl phosphate (AHAP). The protein is Putative 4-hydroxythreonine-4-phosphate dehydrogenase 2 of Rhizobium meliloti (strain 1021) (Ensifer meliloti).